The chain runs to 467 residues: UDP-N-acetylmuramate--L-alanine ligase (467 aa).

ATP is bound at residue Gly-114–Thr-120.

It belongs to the MurCDEF family.

It localises to the cytoplasm. The catalysed reaction is UDP-N-acetyl-alpha-D-muramate + L-alanine + ATP = UDP-N-acetyl-alpha-D-muramoyl-L-alanine + ADP + phosphate + H(+). It functions in the pathway cell wall biogenesis; peptidoglycan biosynthesis. Functionally, cell wall formation. The polypeptide is UDP-N-acetylmuramate--L-alanine ligase (Chlorobium chlorochromatii (strain CaD3)).